We begin with the raw amino-acid sequence, 443 residues long: Phenylalanine--tRNA ligase alpha subunit (443 aa).

Residues T332, 375–377 (QVE), and Y415 each bind L-phenylalanine. E417 contributes to the Mg(2+) binding site. An L-phenylalanine-binding site is contributed by F441.

It belongs to the class-II aminoacyl-tRNA synthetase family. Phe-tRNA synthetase alpha subunit type 2 subfamily. In terms of assembly, heterotetramer; dimer of two heterodimers formed by FARSA and FARSB. Mg(2+) serves as cofactor.

Its subcellular location is the cytoplasm. It carries out the reaction tRNA(Phe) + L-phenylalanine + ATP = L-phenylalanyl-tRNA(Phe) + AMP + diphosphate + H(+). In Gallus gallus (Chicken), this protein is Phenylalanine--tRNA ligase alpha subunit (FARSA).